We begin with the raw amino-acid sequence, 211 residues long: Probable nicotinate-nucleotide adenylyltransferase (211 aa).

It belongs to the NadD family.

It catalyses the reaction nicotinate beta-D-ribonucleotide + ATP + H(+) = deamido-NAD(+) + diphosphate. Its pathway is cofactor biosynthesis; NAD(+) biosynthesis; deamido-NAD(+) from nicotinate D-ribonucleotide: step 1/1. Catalyzes the reversible adenylation of nicotinate mononucleotide (NaMN) to nicotinic acid adenine dinucleotide (NaAD). The polypeptide is Probable nicotinate-nucleotide adenylyltransferase (Wigglesworthia glossinidia brevipalpis).